Consider the following 316-residue polypeptide: MSPVISHPRSAAARHQSDELSPITITVDCPAKTNLTLEVGPAHDEWGGRHELDTIYCAIGVYDTVTATAKQPGAGFSLELEGAYLGDLASSRSDMRRNHAVLALFAMAQAAEREPDVALTITKRIPVGAGLGGGSADAAATMLAVNRLWELNWPIERLRTIAATLGADMPFCLTGGLAYGTGFGERITDIAPGSRDELALIEQGFSGEVLVGAYQSQLSTPEVYHTFDIVGAAEGDRNHLQAAAISLHPRSGQAIDAATQAGASHAFVSGSGPSVVAFAADEAAAQRIIEVWRDTAVVDRIIRAKSPEHPNISVRQ.

Lysine 32 is an active-site residue. Residue 126 to 136 (PVGAGLGGGSA) participates in ATP binding. Residue aspartate 168 is part of the active site.

Belongs to the GHMP kinase family. IspE subfamily.

The enzyme catalyses 4-CDP-2-C-methyl-D-erythritol + ATP = 4-CDP-2-C-methyl-D-erythritol 2-phosphate + ADP + H(+). The protein operates within isoprenoid biosynthesis; isopentenyl diphosphate biosynthesis via DXP pathway; isopentenyl diphosphate from 1-deoxy-D-xylulose 5-phosphate: step 3/6. Functionally, catalyzes the phosphorylation of the position 2 hydroxy group of 4-diphosphocytidyl-2C-methyl-D-erythritol. The polypeptide is 4-diphosphocytidyl-2-C-methyl-D-erythritol kinase (Bifidobacterium longum (strain NCC 2705)).